Here is a 358-residue protein sequence, read N- to C-terminus: L-tryptophan methyltransferase trpM (358 aa).

This sequence belongs to the methyltransferase superfamily.

It catalyses the reaction L-tryptophan + S-adenosyl-L-methionine = N(alpha)-methyl-L-tryptophan + S-adenosyl-L-homocysteine + H(+). The catalysed reaction is N(alpha)-methyl-L-tryptophan + S-adenosyl-L-methionine = N(alpha),N(alpha)-dimethyl-L-tryptophan + S-adenosyl-L-homocysteine + H(+). It carries out the reaction N(alpha),N(alpha)-dimethyl-L-tryptophan + S-adenosyl-L-methionine = N(alpha),N(alpha),N(alpha)-trimethyl-L-tryptophan + S-adenosyl-L-homocysteine + H(+). Functionally, methyltransferase that catalyzes iterative L-tryptophan N-methylations to produce L-abrine (N-alpha-methyl-L-tryptophan) and N,N-alpha-dimethyl-L-tryptophan. Also catalyzes a third methylation to yield L-hypaphorine (N,N,N-alpha-trimethyl-L-tryptopan), an agonist of the phytohormone indole-3-acetic acid. Can also N-methylate the non-native amino acid substrate 4-hydroxytryptophan, but the ability to incorporate trpM into a functional psilocybin biosynthesis pathway is indeed thwarted by the inability of the L-tryptophan decarboxylase psiD to use N,N-dimethyl-4-hydroxytryptophan as substrate. This chain is L-tryptophan methyltransferase trpM, found in Psilocybe serbica.